Here is a 439-residue protein sequence, read N- to C-terminus: Probable aspartic-type endopeptidase AFUA_3G01220 (439 aa).

The signal sequence occupies residues 1-20 (MHFSIGSLFLYLIASASCTA). The segment at 31–50 (RTPFTTSTSKPSAFTNPSTD) is disordered. Positions 32–45 (TPFTTSTSKPSAFT) are enriched in low complexity. A Peptidase A1 domain is found at 95-436 (FATSINIGNQ…DVGAAEMRFA (342 aa)). N-linked (GlcNAc...) asparagine glycosylation occurs at Asn103. Residue Asp111 is part of the active site. N-linked (GlcNAc...) asparagine glycosylation is found at Asn149, Asn178, Asn187, Asn253, Asn256, Asn276, and Asn308. Asp323 is a catalytic residue. Asn361 and Asn394 each carry an N-linked (GlcNAc...) asparagine glycan.

It belongs to the peptidase A1 family.

It is found in the secreted. Probable aspartic-type endopeptidase which contributes to virulence. The chain is Probable aspartic-type endopeptidase AFUA_3G01220 from Aspergillus fumigatus (strain ATCC MYA-4609 / CBS 101355 / FGSC A1100 / Af293) (Neosartorya fumigata).